The primary structure comprises 225 residues: Putative elongation factor 1 gamma homolog (225 aa).

Residues 94 to 225 enclose the GST C-terminal domain; it reads DFKTRADILR…MCETEMQPIK (132 aa).

In Saccharomyces cerevisiae (strain ATCC 204508 / S288c) (Baker's yeast), this protein is Putative elongation factor 1 gamma homolog.